The primary structure comprises 234 residues: Ribonuclease 3 (234 aa).

In terms of domain architecture, RNase III spans 13–136; that stretch reads YITLEKALGY…LMAGVYLEAG (124 aa). Residue Glu49 participates in Mg(2+) binding. Asp53 is an active-site residue. Ser122 and Glu125 together coordinate Mg(2+). Residue Glu125 is part of the active site. A DRBM domain is found at 163 to 232; that stretch reads DYKTALQELT…AYQALQKLKG (70 aa).

This sequence belongs to the ribonuclease III family. Homodimer. Mg(2+) serves as cofactor.

The protein resides in the cytoplasm. The catalysed reaction is Endonucleolytic cleavage to 5'-phosphomonoester.. In terms of biological role, digests double-stranded RNA. Involved in the processing of primary rRNA transcript to yield the immediate precursors to the large and small rRNAs (23S and 16S). Processes some mRNAs, and tRNAs when they are encoded in the rRNA operon. Processes pre-crRNA and tracrRNA of type II CRISPR loci if present in the organism. In Helicobacter acinonychis (strain Sheeba), this protein is Ribonuclease 3.